The primary structure comprises 427 residues: Glutamate-1-semialdehyde 2,1-aminomutase (427 aa).

Residue K265 is modified to N6-(pyridoxal phosphate)lysine.

Belongs to the class-III pyridoxal-phosphate-dependent aminotransferase family. HemL subfamily. In terms of assembly, homodimer. Pyridoxal 5'-phosphate is required as a cofactor.

It localises to the cytoplasm. It catalyses the reaction (S)-4-amino-5-oxopentanoate = 5-aminolevulinate. It functions in the pathway porphyrin-containing compound metabolism; protoporphyrin-IX biosynthesis; 5-aminolevulinate from L-glutamyl-tRNA(Glu): step 2/2. The polypeptide is Glutamate-1-semialdehyde 2,1-aminomutase (Pseudomonas putida (strain GB-1)).